We begin with the raw amino-acid sequence, 216 residues long: ATP phosphoribosyltransferase (216 aa).

This sequence belongs to the ATP phosphoribosyltransferase family. Short subfamily. Heteromultimer composed of HisG and HisZ subunits.

The protein localises to the cytoplasm. It carries out the reaction 1-(5-phospho-beta-D-ribosyl)-ATP + diphosphate = 5-phospho-alpha-D-ribose 1-diphosphate + ATP. It functions in the pathway amino-acid biosynthesis; L-histidine biosynthesis; L-histidine from 5-phospho-alpha-D-ribose 1-diphosphate: step 1/9. Functionally, catalyzes the condensation of ATP and 5-phosphoribose 1-diphosphate to form N'-(5'-phosphoribosyl)-ATP (PR-ATP). Has a crucial role in the pathway because the rate of histidine biosynthesis seems to be controlled primarily by regulation of HisG enzymatic activity. The protein is ATP phosphoribosyltransferase of Lachnospira eligens (strain ATCC 27750 / DSM 3376 / VPI C15-48 / C15-B4) (Eubacterium eligens).